Here is a 327-residue protein sequence, read N- to C-terminus: Movement protein (327 aa).

Positions 297–327 (IASSSSTENELARVSQNIDLLKNKLKEICGE) form a coiled coil.

The protein belongs to the caulimoviridae movement protein family. Homotrimer, through the coiled-coil domain. Interacts with VAP. May interact (via N-terminus) with host prenylated Rab acceptor protein 1D (PRA1D).

Its subcellular location is the host cell junction. The protein localises to the host plasmodesma. Functionally, transports viral genome to neighboring plant cells directly through plasmosdesmata, without any budding. The movement protein allows efficient cell to cell propagation, by bypassing the host cell wall barrier. Acts by forming tubules structures that increase the size exclusion limit (SEL) of plasmodesmata, thereby allowing viral ribonucleocapsids to spread directly to neighboring cells. The polypeptide is Movement protein (Cauliflower mosaic virus (strain D/H) (CaMV)).